The sequence spans 303 residues: Ribosomal protein L11 methyltransferase (303 aa).

Residues Thr-144, Gly-165, Asp-187, and Asn-235 each contribute to the S-adenosyl-L-methionine site.

This sequence belongs to the methyltransferase superfamily. PrmA family.

It is found in the cytoplasm. It catalyses the reaction L-lysyl-[protein] + 3 S-adenosyl-L-methionine = N(6),N(6),N(6)-trimethyl-L-lysyl-[protein] + 3 S-adenosyl-L-homocysteine + 3 H(+). Its function is as follows. Methylates ribosomal protein L11. This Prochlorococcus marinus (strain MIT 9312) protein is Ribosomal protein L11 methyltransferase.